Here is a 745-residue protein sequence, read N- to C-terminus: Junction plakoglobin (745 aa).

The residue at position 1 (Met-1) is an N-acetylmethionine. O-linked (GlcNAc) threonine glycosylation is present at Thr-14. A phosphoserine mark is found at Ser-99 and Ser-125. 12 ARM repeats span residues 132 to 171 (NYQD…QLSK), 172 to 215 (KEAS…LSHH), 216 to 255 (REGL…NLLL), 258 to 297 (EGAK…LLAY), 298 to 341 (GNQE…LSVC), 342 to 381 (PSNK…NLSD), 383 to 420 (ATKQ…NLTC), 423 to 464 (SKNK…HLTS), 470 to 510 (EMAQ…NLAL), 512 to 551 (PANH…QPYT), 574 to 613 (PMNR…ELAQ), and 615 to 661 (KEAA…PDYR). Residues 132 to 297 (NYQDDAELAT…TTDCLQLLAY (166 aa)) form an interaction with DSC1 and DSG1 region. Residue Ser-182 is modified to Phosphoserine. Positions 574-661 (PMNRMEIFRL…ISEDKNPDYR (88 aa)) are interaction with DSC1. Ser-665 and Ser-730 each carry phosphoserine.

The protein belongs to the beta-catenin family. As to quaternary structure, homodimer. Component of an E-cadherin/catenin adhesion complex composed of at least E-cadherin/CDH1 and gamma-catenin/JUP, and possibly alpha-catenin/CTNNA1; the complex is located to adherens junctions. The stable association of CTNNA1 is controversial as CTNNA1 was shown not to bind to F-actin when assembled in the complex. Interacts with MUC1. Interacts with CAV1. Interacts with PTPRJ. Interacts with DSG1. Interacts with DSC1 and DSC2. Interacts with PKP2. Interacts with PKP3 (via N-terminus); the interaction is required for PKP3 localization to desmosome cell-cell junctions. Interacts with DSG4. Post-translationally, may be phosphorylated by FER.

The protein resides in the cell junction. It localises to the adherens junction. It is found in the desmosome. The protein localises to the cytoplasm. Its subcellular location is the cytoskeleton. The protein resides in the cell membrane. It localises to the nucleus. Common junctional plaque protein. The membrane-associated plaques are architectural elements in an important strategic position to influence the arrangement and function of both the cytoskeleton and the cells within the tissue. The presence of plakoglobin in both the desmosomes and in the intermediate junctions suggests that it plays a central role in the structure and function of submembranous plaques. Acts as a substrate for VE-PTP and is required by it to stimulate VE-cadherin function in endothelial cells. Can replace beta-catenin in E-cadherin/catenin adhesion complexes which are proposed to couple cadherins to the actin cytoskeleton. In Sus scrofa (Pig), this protein is Junction plakoglobin.